The chain runs to 421 residues: Dihydroorotase (421 aa).

His-60 and His-62 together coordinate Zn(2+). Residues 62–64 (HFR) and Asn-94 each bind substrate. Residues Asp-151, His-178, and His-231 each coordinate Zn(2+). Asn-277 contributes to the substrate binding site. Asp-304 is a binding site for Zn(2+). The active site involves Asp-304. His-308 serves as a coordination point for substrate.

The protein belongs to the metallo-dependent hydrolases superfamily. DHOase family. Class I DHOase subfamily. Zn(2+) is required as a cofactor.

The enzyme catalyses (S)-dihydroorotate + H2O = N-carbamoyl-L-aspartate + H(+). Its pathway is pyrimidine metabolism; UMP biosynthesis via de novo pathway; (S)-dihydroorotate from bicarbonate: step 3/3. Functionally, catalyzes the reversible cyclization of carbamoyl aspartate to dihydroorotate. The sequence is that of Dihydroorotase from Clostridioides difficile (strain 630) (Peptoclostridium difficile).